The sequence spans 359 residues: MPIKVGINGFGRIGRMVFQALCEDGLLGTEIDVVAVVDMNTDAEYFAYQMRYDTVHGKFKYEVTTTKSSPSVAKDDTLVVNGHRILCVKAQRNPADLPWGKLGVEYVIESTGLFTAKAAAEGHLRGGARKVVISAPASGGAKTLVMGVNHHEYNPSEHHVVSNASCTTNCLAPIVHVLVKEGFGVQTGLMTTIHSYTATQKTVDGVSVKDWRGGRAAAVNIIPSTTGAAKAVGMVIPSTQGKLTGMSFRVPTPDVSVVDLTFTAARDTSIQEIDAALKRASKTYMKGILGYTDEELVSADFINDNRSSIYDSKATLQNNLPKERRFFKIVSWYDNEWGYSHRVVDLVRHMASKDRSARL.

Residues 12–13 (RI), Asp38, Gln91, and Ser134 contribute to the NAD(+) site. Residues 165–167 (SCT), Thr197, 226–227 (TG), and Arg249 contribute to the D-glyceraldehyde 3-phosphate site. Cys166 (nucleophile) is an active-site residue. Position 335 (Asn335) interacts with NAD(+). Residues 357–359 (ARL) carry the Microbody targeting signal motif.

This sequence belongs to the glyceraldehyde-3-phosphate dehydrogenase family. In terms of assembly, homotetramer.

It is found in the glycosome. It carries out the reaction D-glyceraldehyde 3-phosphate + phosphate + NAD(+) = (2R)-3-phospho-glyceroyl phosphate + NADH + H(+). The protein operates within carbohydrate degradation; glycolysis; pyruvate from D-glyceraldehyde 3-phosphate: step 1/5. This Trypanosoma cruzi protein is Glyceraldehyde-3-phosphate dehydrogenase, glycosomal.